The chain runs to 200 residues: Pyridoxamine 5'-phosphate oxidase homolog (200 aa).

The FMN site is built by F60, K68, and N125.

The protein belongs to the pyridoxamine 5'-phosphate oxidase family. Requires FMN as cofactor.

The protein localises to the cytoplasm. It is found in the nucleus. The sequence is that of Pyridoxamine 5'-phosphate oxidase homolog from Saccharomyces cerevisiae (strain ATCC 204508 / S288c) (Baker's yeast).